Reading from the N-terminus, the 478-residue chain is Probable sodium/glutamine symporter GlnT (478 aa).

10 helical membrane passes run 14-34 (DLLWSKLLIVLLLSFGIYFTF), 85-105 (IAIAIALGGPGAIFWMWIIAI), 145-165 (WMGALFAVLITLSFGIVFNSV), 185-205 (LGLILIAVFGTIIFGGVKRIA), 211-231 (IVVVLAVLYIGVAFFVIFSNI), 236-256 (GVLALIVKNAFGFDQAAGGAL), 298-318 (AFGVLTDTLVICTSTAFIILF), 342-362 (GSWASGFLAILILLFGFCALI), 381-401 (LIFVYRIGVLAMIVFGCVAKV), and 411-431 (FMGLMVIVNLIAIFLLSKVVF).

The protein belongs to the alanine or glycine:cation symporter (AGCS) (TC 2.A.25) family.

It is found in the cell membrane. Probably functions as a sodium/glutamine symporter for glutamine uptake. The polypeptide is Probable sodium/glutamine symporter GlnT (glnT) (Bacillus subtilis (strain 168)).